A 417-amino-acid chain; its full sequence is Serine hydroxymethyltransferase (417 aa).

(6S)-5,6,7,8-tetrahydrofolate contacts are provided by residues leucine 121 and glycine 125–leucine 127. Lysine 229 is subject to N6-(pyridoxal phosphate)lysine. Serine 355 to phenylalanine 357 contacts (6S)-5,6,7,8-tetrahydrofolate.

The protein belongs to the SHMT family. As to quaternary structure, homodimer. It depends on pyridoxal 5'-phosphate as a cofactor.

It localises to the cytoplasm. It catalyses the reaction (6R)-5,10-methylene-5,6,7,8-tetrahydrofolate + glycine + H2O = (6S)-5,6,7,8-tetrahydrofolate + L-serine. The protein operates within one-carbon metabolism; tetrahydrofolate interconversion. Its pathway is amino-acid biosynthesis; glycine biosynthesis; glycine from L-serine: step 1/1. Catalyzes the reversible interconversion of serine and glycine with tetrahydrofolate (THF) serving as the one-carbon carrier. This reaction serves as the major source of one-carbon groups required for the biosynthesis of purines, thymidylate, methionine, and other important biomolecules. Also exhibits THF-independent aldolase activity toward beta-hydroxyamino acids, producing glycine and aldehydes, via a retro-aldol mechanism. In Klebsiella pneumoniae subsp. pneumoniae (strain ATCC 700721 / MGH 78578), this protein is Serine hydroxymethyltransferase.